The chain runs to 614 residues: Translation initiation factor IF-2 (614 aa).

The region spanning 115-283 (ARAPIVTIMG…ILLIAELNNY (169 aa)) is the tr-type G domain. The tract at residues 124–131 (GHVDHGKT) is G1. 124–131 (GHVDHGKT) contributes to the GTP binding site. Residues 149–153 (GITQH) are G2. The G3 stretch occupies residues 170-173 (DTPG). GTP is bound by residues 170-174 (DTPGH) and 224-227 (NKMD). A G4 region spans residues 224-227 (NKMD). The segment at 260–262 (SAL) is G5.

The protein belongs to the TRAFAC class translation factor GTPase superfamily. Classic translation factor GTPase family. IF-2 subfamily.

Its subcellular location is the cytoplasm. Its function is as follows. One of the essential components for the initiation of protein synthesis. Protects formylmethionyl-tRNA from spontaneous hydrolysis and promotes its binding to the 30S ribosomal subunits. Also involved in the hydrolysis of GTP during the formation of the 70S ribosomal complex. The polypeptide is Translation initiation factor IF-2 (Ureaplasma parvum serovar 3 (strain ATCC 27815 / 27 / NCTC 11736)).